We begin with the raw amino-acid sequence, 120 residues long: Large ribosomal subunit protein bL19c (120 aa).

Belongs to the bacterial ribosomal protein bL19 family.

It localises to the plastid. Its subcellular location is the chloroplast. The polypeptide is Large ribosomal subunit protein bL19c (Phaeodactylum tricornutum (strain CCAP 1055/1)).